Here is a 149-residue protein sequence, read N- to C-terminus: Oligosaccharyltransferase complex subunit ostc-B (149 aa).

The Cytoplasmic portion of the chain corresponds to 1-32; the sequence is MESLYRIPFTVLECPNLKLKKPSWLHMPSAMT. Residues 33-53 traverse the membrane as a helical segment; that stretch reads VYAMVVVSYFLITGGIIYDVI. Topologically, residues 54–83 are extracellular; sequence VEPPSVGSMTDEHGHQRPVAFLAYRVNGQY. A helical membrane pass occupies residues 84-104; that stretch reads IMEGLASSFLFTMGGLGFIIL. The Cytoplasmic segment spans residues 105–117; that stretch reads DRSNAPNIPKLNR. A helical membrane pass occupies residues 118 to 138; that stretch reads FLLLFIGFVCVLLSFFMARVF. The Extracellular portion of the chain corresponds to 139 to 149; that stretch reads MRMKLPGYLMG.

Belongs to the OSTC family. Specific component of the STT3A-containing form of the oligosaccharyltransferase (OST) complex.

The protein localises to the membrane. It participates in protein modification; protein glycosylation. Specific component of the STT3A-containing form of the oligosaccharyl transferase (OST) complex that catalyzes the initial transfer of a defined glycan (Glc(3)Man(9)GlcNAc(2) in eukaryotes) from the lipid carrier dolichol-pyrophosphate to an asparagine residue within an Asn-X-Ser/Thr consensus motif in nascent polypeptide chains, the first step in protein N-glycosylation. N-glycosylation occurs cotranslationally and the complex associates with the Sec61 complex at the channel-forming translocon complex that mediates protein translocation across the endoplasmic reticulum (ER). All subunits are required for a maximal enzyme activity. The chain is Oligosaccharyltransferase complex subunit ostc-B from Xenopus laevis (African clawed frog).